We begin with the raw amino-acid sequence, 261 residues long: Maspardin (261 aa).

One can recognise an AB hydrolase-1 domain in the interval 87 to 159 (FCDGFRKLLD…NSFWLMPAFM (73 aa)). Serine 257 is modified (phosphoserine).

Belongs to the AB hydrolase superfamily. As to quaternary structure, interacts with CD4. Interacts with ALDH16A1.

It is found in the cytoplasm. In terms of biological role, may play a role as a negative regulatory factor in CD4-dependent T-cell activation. This chain is Maspardin (Spg21), found in Rattus norvegicus (Rat).